We begin with the raw amino-acid sequence, 107 residues long: Ribonuclease P protein subunit rpr2 (107 aa).

Residues Cys-59, Cys-62, Cys-93, and Cys-96 each contribute to the Zn(2+) site.

It belongs to the eukaryotic/archaeal RNase P protein component 4 family. Requires Zn(2+) as cofactor.

The protein localises to the cytoplasm. Its subcellular location is the nucleus. It catalyses the reaction Endonucleolytic cleavage of RNA, removing 5'-extranucleotides from tRNA precursor.. In terms of biological role, component of ribonuclease P, a protein complex that generates mature tRNA molecules by cleaving their 5'-ends. In Schizosaccharomyces pombe (strain 972 / ATCC 24843) (Fission yeast), this protein is Ribonuclease P protein subunit rpr2 (rpr2).